We begin with the raw amino-acid sequence, 357 residues long: Ribonuclease 3 (357 aa).

The RNase III domain maps to 6-155; it reads IKFIQDQIGY…ILGAIALDSN (150 aa). Glu45 is a Mg(2+) binding site. Asp49 is a catalytic residue. Mg(2+) contacts are provided by Asp141 and Glu144. Residue Glu144 is part of the active site. DRBM domains follow at residues 198–267 and 285–355; these read PLHC…YLKD and DSIG…FVLE.

Belongs to the ribonuclease III family. As to quaternary structure, homodimer. The cofactor is Mg(2+).

It is found in the cytoplasm. The catalysed reaction is Endonucleolytic cleavage to 5'-phosphomonoester.. Functionally, digests double-stranded RNA. Involved in the processing of primary rRNA transcript to yield the immediate precursors to the large and small rRNAs (23S and 16S). Processes some mRNAs, and tRNAs when they are encoded in the rRNA operon. Processes pre-crRNA and tracrRNA of type II CRISPR loci if present in the organism. The polypeptide is Ribonuclease 3 (rnc) (Roseburia hominis (strain DSM 16839 / JCM 17582 / NCIMB 14029 / A2-183)).